The primary structure comprises 112 residues: MKGPPTFCSLLLLSLLLSPDPTAAFLLPPSTACCTQLYRKPLSDKLLRKVIQVELQEADGDCHLQAFVLHLAQRSICIHPQNPSLSQWFEHQERKLHGTLPKLNFGMLRKMG.

An N-terminal signal peptide occupies residues 1–24 (MKGPPTFCSLLLLSLLLSPDPTAA). 2 disulfides stabilise this stretch: C33–C62 and C34–C77.

It belongs to the intercrine beta (chemokine CC) family. As to quaternary structure, monomer, dimer, and tetramer. Heparin avidly promotes oligomerization. Interacts with TNFAIP6 (via Link domain). Testis, thymus, placenta, ovary and skin.

It localises to the secreted. In terms of biological role, chemotactic factor that attracts skin-associated memory T-lymphocytes. May play a role in mediating homing of lymphocytes to cutaneous sites. Binds to CCR10. The chain is C-C motif chemokine 27 (CCL27) from Homo sapiens (Human).